Reading from the N-terminus, the 81-residue chain is Translational regulator CsrA (81 aa).

Belongs to the CsrA/RsmA family. In terms of assembly, homodimer; the beta-strands of each monomer intercalate to form a hydrophobic core, while the alpha-helices form wings that extend away from the core.

The protein localises to the cytoplasm. In terms of biological role, a translational regulator that binds mRNA to regulate translation initiation and/or mRNA stability. Usually binds in the 5'-UTR at or near the Shine-Dalgarno sequence preventing ribosome-binding, thus repressing translation. Its main target seems to be the major flagellin gene, while its function is anatagonized by FliW. This is Translational regulator CsrA from Borreliella burgdorferi (strain ATCC 35210 / DSM 4680 / CIP 102532 / B31) (Borrelia burgdorferi).